Reading from the N-terminus, the 196-residue chain is Probable malonic semialdehyde reductase RutE (196 aa).

The protein belongs to the nitroreductase family. HadB/RutE subfamily. It depends on FMN as a cofactor.

The enzyme catalyses 3-hydroxypropanoate + NADP(+) = 3-oxopropanoate + NADPH + H(+). In terms of biological role, may reduce toxic product malonic semialdehyde to 3-hydroxypropionic acid, which is excreted. This chain is Probable malonic semialdehyde reductase RutE, found in Escherichia coli (strain K12 / MC4100 / BW2952).